Consider the following 348-residue polypeptide: tRNA N6-adenosine threonylcarbamoyltransferase (348 aa).

Positions 115 and 119 each coordinate Fe cation. Substrate is bound by residues 138 to 142 (LVSGG), D171, G184, and N276. Position 304 (D304) interacts with Fe cation.

The protein belongs to the KAE1 / TsaD family. It depends on Fe(2+) as a cofactor.

The protein resides in the cytoplasm. The enzyme catalyses L-threonylcarbamoyladenylate + adenosine(37) in tRNA = N(6)-L-threonylcarbamoyladenosine(37) in tRNA + AMP + H(+). Its function is as follows. Required for the formation of a threonylcarbamoyl group on adenosine at position 37 (t(6)A37) in tRNAs that read codons beginning with adenine. Is involved in the transfer of the threonylcarbamoyl moiety of threonylcarbamoyl-AMP (TC-AMP) to the N6 group of A37, together with TsaE and TsaB. TsaD likely plays a direct catalytic role in this reaction. This Xylella fastidiosa (strain M23) protein is tRNA N6-adenosine threonylcarbamoyltransferase.